A 193-amino-acid chain; its full sequence is Ribonuclease HII (193 aa).

Residues 15 to 193 (CIVAGIDEAG…PYHRRSFRCC (179 aa)) form the RNase H type-2 domain. Asp-21, Glu-22, and Asp-112 together coordinate a divalent metal cation.

The protein belongs to the RNase HII family. Requires Mn(2+) as cofactor. Mg(2+) is required as a cofactor.

The protein localises to the cytoplasm. The catalysed reaction is Endonucleolytic cleavage to 5'-phosphomonoester.. In terms of biological role, endonuclease that specifically degrades the RNA of RNA-DNA hybrids. This Rickettsia conorii (strain ATCC VR-613 / Malish 7) protein is Ribonuclease HII.